Here is a 37-residue protein sequence, read N- to C-terminus: Large ribosomal subunit protein bL36 (37 aa).

Belongs to the bacterial ribosomal protein bL36 family.

In Clostridioides difficile (strain 630) (Peptoclostridium difficile), this protein is Large ribosomal subunit protein bL36.